The sequence spans 733 residues: Hypermethylated in cancer 1 protein (733 aa).

In terms of domain architecture, BTB spans 47–110 (CDVIIVVQNA…IYTGRLTDSV (64 aa)). A mediates HDAC-dependent transcriptional repression region spans residues 154-315 (KYCHLRGGGS…PFRGSGGSPG (162 aa)). The residue at position 159 (R159) is an Omega-N-methylarginine. Residues 189-209 (YSSPAGPPPPPAAEPPSGPDA) are disordered. A compositionally biased stretch (pro residues) spans 193 to 206 (AGPPPPPAAEPPSG). S237 is modified (phosphoserine). The interval 241–247 (GLDLSKK) is interaction with CTBP1. A disordered region spans residues 241–421 (GLDLSKKSPP…PGGHLEGYPC (181 aa)). The residue at position 248 (S248) is a Phosphoserine. K333 bears the N6-acetyllysine; alternate mark. Residue K333 forms a Glycyl lysine isopeptide (Lys-Gly) (interchain with G-Cter in SUMO); alternate linkage. Residues 344-361 (ELVRDRGSPGERLEERGG) are compositionally biased toward basic and acidic residues. The residue at position 366 (S366) is a Phosphoserine. Over residues 368 to 380 (GGPPLGLVPPPRY) the composition is skewed to pro residues. 5 C2H2-type zinc fingers span residues 437-464 (YVCI…EEEE), 507-534 (YRCA…LTRP), 535-562 (YPCT…GLKP), 563-590 (FACD…GEKP), and 591-618 (YECQ…VGGA). At S704 the chain carries Phosphoserine.

The protein belongs to the krueppel C2H2-type zinc-finger protein family. Hic subfamily. In terms of assembly, self-associates. Interacts with HIC2. Interacts with CTBP1 and CTBP2. Interacts with TCF7L2 and ARID1A. Interacts with MTA1 and MBD3; indicative for an association with the NuRD complex. Interacts with SIRT1. Post-translationally, acetylated on several residues, including Lys-333. Lys-333 is deacetylated by SIRT1. Sumoylated on Lys-333 by a PIAS family member, which enhances interaction with MTA1, positively regulates transcriptional repression activity and is enhanced by HDAC4. As to expression, ubiquitously expressed with highest levels in heart and lung.

The protein resides in the nucleus. In terms of biological role, transcriptional repressor. Recognizes and binds to the consensus sequence '5-[CG]NG[CG]GGGCA[CA]CC-3'. May act as a tumor suppressor. Involved in development of head, face, limbs and ventral body wall. Involved in down-regulation of SIRT1 and thereby is involved in regulation of p53/TP53-dependent apoptotic DNA-damage responses. The specific target gene promoter association seems to be depend on corepressors, such as CTBP1 or CTBP2 and MTA1. In cooperation with MTA1 (indicative for an association with the NuRD complex) represses transcription from CCND1/cyclin-D1 and CDKN1C/p57Kip2 specifically in quiescent cells. Involved in regulation of the Wnt signaling pathway probably by association with TCF7L2 and preventing TCF7L2 and CTNNB1 association with promoters of TCF-responsive genes. Seems to repress transcription from E2F1 and ATOH1 which involves ARID1A, indicative for the participation of a distinct SWI/SNF-type chromatin-remodeling complex. Probably represses transcription from ACKR3, FGFBP1 and EFNA1. This chain is Hypermethylated in cancer 1 protein (Hic1), found in Mus musculus (Mouse).